The sequence spans 346 residues: Phosphoribosylformylglycinamidine cyclo-ligase (346 aa).

The protein belongs to the AIR synthase family.

It is found in the cytoplasm. The enzyme catalyses 2-formamido-N(1)-(5-O-phospho-beta-D-ribosyl)acetamidine + ATP = 5-amino-1-(5-phospho-beta-D-ribosyl)imidazole + ADP + phosphate + H(+). It participates in purine metabolism; IMP biosynthesis via de novo pathway; 5-amino-1-(5-phospho-D-ribosyl)imidazole from N(2)-formyl-N(1)-(5-phospho-D-ribosyl)glycinamide: step 2/2. The protein is Phosphoribosylformylglycinamidine cyclo-ligase of Vibrio campbellii (strain ATCC BAA-1116).